A 95-amino-acid chain; its full sequence is Aspartyl/glutamyl-tRNA(Asn/Gln) amidotransferase subunit C (95 aa).

This sequence belongs to the GatC family. Heterotrimer of A, B and C subunits.

It carries out the reaction L-glutamyl-tRNA(Gln) + L-glutamine + ATP + H2O = L-glutaminyl-tRNA(Gln) + L-glutamate + ADP + phosphate + H(+). The enzyme catalyses L-aspartyl-tRNA(Asn) + L-glutamine + ATP + H2O = L-asparaginyl-tRNA(Asn) + L-glutamate + ADP + phosphate + 2 H(+). Functionally, allows the formation of correctly charged Asn-tRNA(Asn) or Gln-tRNA(Gln) through the transamidation of misacylated Asp-tRNA(Asn) or Glu-tRNA(Gln) in organisms which lack either or both of asparaginyl-tRNA or glutaminyl-tRNA synthetases. The reaction takes place in the presence of glutamine and ATP through an activated phospho-Asp-tRNA(Asn) or phospho-Glu-tRNA(Gln). The chain is Aspartyl/glutamyl-tRNA(Asn/Gln) amidotransferase subunit C from Cytophaga hutchinsonii (strain ATCC 33406 / DSM 1761 / CIP 103989 / NBRC 15051 / NCIMB 9469 / D465).